The chain runs to 848 residues: Protein NETWORKED 2C (848 aa).

Residues 10-90 (YSWWWASHVR…ERYDHISKEL (81 aa)) form the NAB domain. Positions 108–141 (FAMNEDDDDDAPVSPRHHKNKTSNKNVPKVPDLP) are disordered. Coiled-coil stretches lie at residues 172–204 (LSKTEAVEEIDKLQKEILVLQTEKEFVKTSYEN), 241–278 (EAQILMSTTALKSCQEKLEELRDKQEQNVKEVDVSRKQ), 305–454 (SEKE…KATN), and 752–797 (AKFE…SEEF).

The protein belongs to the NET family.

Its function is as follows. Plant-specific actin binding protein. May be part of a membrane-cytoskeletal adapter complex. This is Protein NETWORKED 2C from Arabidopsis thaliana (Mouse-ear cress).